Consider the following 199-residue polypeptide: Protein extra-macrochaetae (199 aa).

One can recognise a bHLH domain in the interval R23 to L75. S106 carries the phosphoserine modification. The segment at R127–S199 is disordered. The segment covering Q161–L182 has biased composition (low complexity).

Heterodimer with other HLH proteins.

The protein localises to the nucleus. Its function is as follows. Participates in sensory organ patterning by antagonizing the neurogenic activity of the Achaete-scute complex (AS-C). It lacks a basic DNA-binding domain but is able to form heterodimers with other HLH proteins, thereby inhibiting DNA binding. May sequester proneural proteins in complexes inefficient for DNA interaction. EMC also affects vein differentiation. Inhibits the activity of AS-C proteins by forming an non-DNA binding heterodimer. This chain is Protein extra-macrochaetae (emc), found in Drosophila melanogaster (Fruit fly).